The primary structure comprises 258 residues: Tritrans,polycis-undecaprenyl-diphosphate synthase (geranylgeranyl-diphosphate specific) (258 aa).

Asp-37 is a catalytic residue. A Mg(2+)-binding site is contributed by Asp-37. Residues 38–41 (GNRR), His-54, and 82–84 (STE) contribute to the substrate site. The active-site Proton acceptor is Asn-85. Substrate contacts are provided by residues Phe-86, Arg-88, Arg-207, and 213-215 (RIS). Position 226 (Glu-226) interacts with Mg(2+).

Belongs to the UPP synthase family. Homodimer. Mg(2+) is required as a cofactor.

It carries out the reaction geranylgeranyl diphosphate + 7 isopentenyl diphosphate = tri-trans,hepta-cis-undecaprenyl diphosphate + 7 diphosphate. Its function is as follows. Catalyzes the sequential condensation of isopentenyl diphosphate (IPP) with geranylgeranyl diphosphate (GGPP) to yield (2Z,6Z,10Z,14Z,18Z,22Z,26Z,30E,34E,38E)-undecaprenyl diphosphate (tritrans,heptacis-UPP). It is probably the precursor of glycosyl carrier lipids. This is Tritrans,polycis-undecaprenyl-diphosphate synthase (geranylgeranyl-diphosphate specific) from Thermoplasma acidophilum (strain ATCC 25905 / DSM 1728 / JCM 9062 / NBRC 15155 / AMRC-C165).